We begin with the raw amino-acid sequence, 403 residues long: Farnesyl pyrophosphate synthase (403 aa).

Positions 156 and 160 each coordinate Mg(2+). Positions 156–160 (DDLAD) match the DDXXD motif motif.

This sequence belongs to the FPP/GGPP synthase family. Mg(2+) serves as cofactor.

The catalysed reaction is isopentenyl diphosphate + (2E)-geranyl diphosphate = (2Z,6E)-farnesyl diphosphate + diphosphate. It functions in the pathway pheromone biosynthesis. Farnesyl pyrophosphate synthase involved in pheromone biosynthesis by catalyzing the formation of (2Z,6E)-farnesyl diphosphate. This Nezara viridula (Southern green stink bug) protein is Farnesyl pyrophosphate synthase.